Reading from the N-terminus, the 267-residue chain is Probable membrane transporter protein MJ0441 (267 aa).

A run of 7 helical transmembrane segments spans residues 10–30, 31–51, 55–75, 87–107, 158–178, 185–205, and 213–233; these read LLLLPLLIIVGFIVGILGSLF, GIGGGFLVAPILTFIFDYFGI, VKFAVGTSLFVVFINSIISIF, ASITIGIISLVFSYFSGFLVV, FLSGLFGIGGGIVIIPILAMA, AVAISVGVIPLTSIGGLISYL, and IYNIGYVSIPIALIMAIPIIY.

This sequence belongs to the 4-toluene sulfonate uptake permease (TSUP) (TC 2.A.102) family.

The protein resides in the cell membrane. The polypeptide is Probable membrane transporter protein MJ0441 (Methanocaldococcus jannaschii (strain ATCC 43067 / DSM 2661 / JAL-1 / JCM 10045 / NBRC 100440) (Methanococcus jannaschii)).